The chain runs to 182 residues: MSSFFKFYKASLQSHPKRTNALTTGFLFGLGDIVAQTQFPEPGASYDPMRTLRPFLYGAVLFSLVGDKWYRFLSTVRLGRLPQAHWANVLARVACDQLIFAPIGVPLYYTAMALMEGGSLEDVRIRLSEKWWSTLLANWIVWPAFQLCNFSLVPVQHRLLTVNVLSIFWNTYLSYSNSTASS.

Helical transmembrane passes span 51–70 (TLRPFLYGAVLFSLVGDKWY), 98–118 (LIFAPIGVPLYYTAMALMEGG), and 135–155 (LLANWIVWPAFQLCNFSLVPV).

The protein belongs to the peroxisomal membrane protein PXMP2/4 family.

The protein localises to the mitochondrion inner membrane. May be involved in cellular response to stress. Required to maintain mitochondrial DNA (mtDNA) integrity and stability. In Eremothecium gossypii (strain ATCC 10895 / CBS 109.51 / FGSC 9923 / NRRL Y-1056) (Yeast), this protein is Protein SYM1 (SYM1).